A 273-amino-acid polypeptide reads, in one-letter code: MSINPITRNKIKDYLNGFIDQQLAVYSQRNLREFHDVDSYLAAISSDGDLKPFHASIIPSAIMRLNRFERSLSTGLGSTFEECARVIALDHHAVAIRSYDIHTSLDQAVWASIDLLISNIDRNNQRQIPSITEMLEKLQSIALTGIAENHVVRADLYVQRHDGSELFFEIKSPKPNKGQCLEVMQRLLRIYAIKQNSTLPTHAFYAMAYNPWGANRASYTYSIVKKYTDFTNAVVIGQEFWSLIGESSTYTELLEIYREVGLSKSSEITKKLL.

Belongs to the TdeIII type II restriction endonuclease family.

It catalyses the reaction Endonucleolytic cleavage of DNA to give specific double-stranded fragments with terminal 5'-phosphates.. Functionally, a P subtype restriction enzyme that recognizes the double-stranded sequence 5'-GGWCC-3' and cleaves after G-1. The sequence is that of Type II restriction enzyme HgiCII from Herpetosiphon aurantiacus (Herpetosiphon giganteus).